Here is a 146-residue protein sequence, read N- to C-terminus: Large ribosomal subunit protein bL19 (146 aa).

The protein belongs to the bacterial ribosomal protein bL19 family.

Its function is as follows. This protein is located at the 30S-50S ribosomal subunit interface and may play a role in the structure and function of the aminoacyl-tRNA binding site. The polypeptide is Large ribosomal subunit protein bL19 (Bartonella bacilliformis (strain ATCC 35685 / KC583 / Herrer 020/F12,63)).